The following is an 82-amino-acid chain: MSYEKVLQAGKTVVGTKQTVRALKEGKALEVIVAEDADPSIIDKVMEAAKEANVPVTKVDSMKKLGKACKIQVGAAAVAIIR.

The protein belongs to the eukaryotic ribosomal protein eL8 family.

The sequence is that of RNA-binding protein GWCH70_0105 from Geobacillus sp. (strain WCH70).